The primary structure comprises 541 residues: Zinc finger protein 513 (541 aa).

The tract at residues Met1–Pro118 is disordered. A compositionally biased stretch (acidic residues) spans Leu44–Gly57. Residues Ser85 and Ser96 each carry the phosphoserine modification. The segment covering Glu103–Arg115 has biased composition (basic and acidic residues). 8 consecutive C2H2-type zinc fingers follow at residues Tyr150–His172, Phe178–His200, Tyr206–His228, Phe360–His382, Phe388–His410, Tyr416–His438, Phe444–His466, and Phe472–His494. A disordered region spans residues Lys492–Ser541.

The protein belongs to the krueppel C2H2-type zinc-finger protein family. Binds DNA. Can associate with the proximal promoter regions of PAX6 and SP4, and their known targets including ARR3, RHO, OPN1MW2 and OPN1SW. In terms of tissue distribution, in the retina, expressed in the outer and inner nuclear layers, and the ganglion cell layer.

It localises to the nucleus. Transcriptional regulator that plays a role in retinal development and maintenance. This is Zinc finger protein 513 (ZNF513) from Homo sapiens (Human).